A 189-amino-acid polypeptide reads, in one-letter code: ATP synthase subunit b 1 (189 aa).

Residues 32–52 (TYFASQLFWLTIAFVILYIAL) traverse the membrane as a helical segment.

Belongs to the ATPase B chain family. In terms of assembly, F-type ATPases have 2 components, F(1) - the catalytic core - and F(0) - the membrane proton channel. F(1) has five subunits: alpha(3), beta(3), gamma(1), delta(1), epsilon(1). F(0) has three main subunits: a(1), b(2) and c(10-14). The alpha and beta chains form an alternating ring which encloses part of the gamma chain. F(1) is attached to F(0) by a central stalk formed by the gamma and epsilon chains, while a peripheral stalk is formed by the delta and b chains.

It is found in the cell inner membrane. In terms of biological role, f(1)F(0) ATP synthase produces ATP from ADP in the presence of a proton or sodium gradient. F-type ATPases consist of two structural domains, F(1) containing the extramembraneous catalytic core and F(0) containing the membrane proton channel, linked together by a central stalk and a peripheral stalk. During catalysis, ATP synthesis in the catalytic domain of F(1) is coupled via a rotary mechanism of the central stalk subunits to proton translocation. Functionally, component of the F(0) channel, it forms part of the peripheral stalk, linking F(1) to F(0). This Maricaulis maris (strain MCS10) (Caulobacter maris) protein is ATP synthase subunit b 1.